The following is a 35-amino-acid chain: U1-theraphotoxin-Hs1f (35 aa).

3 disulfide bridges follow: Cys3-Cys16, Cys7-Cys27, and Cys21-Cys32.

Belongs to the neurotoxin 12 (Hwtx-2) family. 02 (Hwtx-2) subfamily. Expressed by the venom gland.

It is found in the secreted. Functionally, blocks neuromuscular transmission. Acts cooperatively to potentiate the activity of huwentoxin-I. Paralyzes locusts and kills mice following intracerebroventricular injection. This Cyriopagopus schmidti (Chinese bird spider) protein is U1-theraphotoxin-Hs1f.